Consider the following 348-residue polypeptide: Fructose-1,6-bisphosphatase class 1 (348 aa).

Mg(2+) is bound by residues Glu92, Asp111, Leu113, and Asp114. Substrate contacts are provided by residues 114–117 (DGSS) and Asn204. Residue Glu276 coordinates Mg(2+).

Belongs to the FBPase class 1 family. Homotetramer. Requires Mg(2+) as cofactor.

It is found in the cytoplasm. The catalysed reaction is beta-D-fructose 1,6-bisphosphate + H2O = beta-D-fructose 6-phosphate + phosphate. It participates in carbohydrate biosynthesis; gluconeogenesis. This chain is Fructose-1,6-bisphosphatase class 1, found in Methylorubrum extorquens (strain PA1) (Methylobacterium extorquens).